The chain runs to 548 residues: Protoporphyrinogen oxidase, chloroplastic (548 aa).

The transit peptide at 1–50 (MTTTPIANHPNIFTHQSSSSPLAFLNRTSFIPFSSISKRNSVNCNGWRTR) directs the protein to the chloroplast. FAD is bound by residues 78–83 (GAGISG), 101–102 (EA), and 123–126 (GPNS). The segment covering 265 to 279 (KERSSTPKAPRDPRL) has biased composition (basic and acidic residues). The disordered stretch occupies residues 265-287 (KERSSTPKAPRDPRLPKPKGQTV). 522–524 (VAL) contributes to the FAD binding site.

Belongs to the protoporphyrinogen/coproporphyrinogen oxidase family. Protoporphyrinogen oxidase subfamily. As to quaternary structure, homodimer. FAD is required as a cofactor.

Its subcellular location is the plastid. It is found in the chloroplast. It catalyses the reaction protoporphyrinogen IX + 3 O2 = protoporphyrin IX + 3 H2O2. The protein operates within porphyrin-containing compound metabolism; protoporphyrin-IX biosynthesis; protoporphyrin-IX from protoporphyrinogen-IX: step 1/1. It participates in porphyrin-containing compound metabolism; chlorophyll biosynthesis. Functionally, catalyzes the 6-electron oxidation of protoporphyrinogen-IX to form protoporphyrin-IX. The protein is Protoporphyrinogen oxidase, chloroplastic (PPXI) of Nicotiana tabacum (Common tobacco).